The following is a 439-amino-acid chain: Tol-Pal system protein TolB (439 aa).

An N-terminal signal peptide occupies residues 1 to 22 (MKKPLRWLAALTVLLLPLSALA).

Belongs to the TolB family. The Tol-Pal system is composed of five core proteins: the inner membrane proteins TolA, TolQ and TolR, the periplasmic protein TolB and the outer membrane protein Pal. They form a network linking the inner and outer membranes and the peptidoglycan layer.

It is found in the periplasm. Functionally, part of the Tol-Pal system, which plays a role in outer membrane invagination during cell division and is important for maintaining outer membrane integrity. The chain is Tol-Pal system protein TolB from Xanthomonas oryzae pv. oryzae (strain PXO99A).